Consider the following 503-residue polypeptide: Ferulic acid decarboxylase 1 (503 aa).

Residues Asn-170, His-193, and Glu-236 each contribute to the Mn(2+) site. Prenylated FMN-binding positions include 170 to 175, 192 to 193, and Glu-236; these read NWSIAR and QH. Glu-285 (proton donor) is an active-site residue. Position 394 (Lys-394) interacts with prenylated FMN.

It belongs to the UbiD family. UbiD-like/FDC subfamily. As to quaternary structure, homodimer. May form higher order oligomers. Mn(2+) serves as cofactor. Requires prenylated FMN as cofactor.

The protein resides in the cytoplasm. It catalyses the reaction (E)-4-coumarate + H(+) = 4-vinylphenol + CO2. It carries out the reaction (E)-cinnamate + H(+) = styrene + CO2. The enzyme catalyses (E)-ferulate + H(+) = 2-methoxy-4-vinylphenol + CO2. Catalyzes the reversible decarboxylation of aromatic carboxylic acids like ferulic acid, p-coumaric acid or cinnamic acid, producing the corresponding vinyl derivatives 4-vinylphenol, 4-vinylguaiacol, and styrene, respectively, which play the role of aroma metabolites. Not essential for ubiquinone synthesis. The sequence is that of Ferulic acid decarboxylase 1 from Saccharomyces cerevisiae (strain ATCC 204508 / S288c) (Baker's yeast).